We begin with the raw amino-acid sequence, 1094 residues long: Centrosomal protein of 128 kDa (1094 aa).

Residues 1–29 are disordered; it reads MAESSSESDHFRCRDRLSPWAARSTHRGT. Residues 7–17 show a composition bias toward basic and acidic residues; that stretch reads ESDHFRCRDRL. Residue serine 31 is modified to Phosphoserine. The disordered stretch occupies residues 115–140; the sequence is DGGTGSELHHFPPTSPLKDYGDPQGI. Coiled-coil stretches lie at residues 190 to 827 and 879 to 959; these read SRSD…QESI and EELK…IALE. A phosphoserine mark is found at serine 249, serine 291, and serine 331. Positions 319 to 345 are disordered; it reads AEGDRKGLQHQVSQISKQQSNYQDEQG. Residues 328-342 are compositionally biased toward polar residues; that stretch reads HQVSQISKQQSNYQD. The span at 987-999 shows a compositional bias: basic and acidic residues; the sequence is DSCSSSERTDGRY. A disordered region spans residues 987–1018; it reads DSCSSSERTDGRYSKYRVRRNSLQHHQDDTKY. Residues 1000 to 1009 are compositionally biased toward basic residues; it reads SKYRVRRNSL. Serine 1061 carries the phosphoserine modification. The tract at residues 1067–1094 is disordered; sequence VAPDSASNKEDATMNGTSSQPKKEEYGS.

The protein resides in the cytoplasm. It localises to the cytoskeleton. The protein localises to the microtubule organizing center. It is found in the centrosome. Its subcellular location is the centriole. The protein resides in the spindle pole. In Homo sapiens (Human), this protein is Centrosomal protein of 128 kDa (CEP128).